A 329-amino-acid polypeptide reads, in one-letter code: 36 kDa antigen (329 aa).

Residues 11–31 traverse the membrane as a helical segment; it reads AILTGGGALLLGLIVLFYLAY.

The protein belongs to the membrane fusion protein (MFP) (TC 8.A.1) family.

The protein resides in the membrane. In Helicobacter pylori (strain J99 / ATCC 700824) (Campylobacter pylori J99), this protein is 36 kDa antigen.